The chain runs to 510 residues: 2-isopropylmalate synthase (510 aa).

Residues 5–267 enclose the Pyruvate carboxyltransferase domain; the sequence is LVIFDTTLRD…DTRIDTTQIV (263 aa). Mn(2+) contacts are provided by Asp-14, His-202, His-204, and Asn-238. Residues 392–510 are regulatory domain; sequence RLLSLVAHSE…SSLERTHPQV (119 aa).

Belongs to the alpha-IPM synthase/homocitrate synthase family. LeuA type 1 subfamily. As to quaternary structure, homodimer. Mn(2+) is required as a cofactor.

It localises to the cytoplasm. It catalyses the reaction 3-methyl-2-oxobutanoate + acetyl-CoA + H2O = (2S)-2-isopropylmalate + CoA + H(+). Its pathway is amino-acid biosynthesis; L-leucine biosynthesis; L-leucine from 3-methyl-2-oxobutanoate: step 1/4. Its function is as follows. Catalyzes the condensation of the acetyl group of acetyl-CoA with 3-methyl-2-oxobutanoate (2-ketoisovalerate) to form 3-carboxy-3-hydroxy-4-methylpentanoate (2-isopropylmalate). The sequence is that of 2-isopropylmalate synthase from Nitrosomonas eutropha (strain DSM 101675 / C91 / Nm57).